The chain runs to 197 residues: Carnitine operon protein CaiE (197 aa).

Belongs to the transferase hexapeptide repeat family.

It participates in amine and polyamine metabolism; carnitine metabolism. Its function is as follows. Overproduction of CaiE stimulates the activity of CaiB and CaiD. The polypeptide is Carnitine operon protein CaiE (Citrobacter koseri (strain ATCC BAA-895 / CDC 4225-83 / SGSC4696)).